The sequence spans 140 residues: uncharacterized protein (140 aa).

This is an uncharacterized protein from Mycoplasma genitalium (strain ATCC 33530 / DSM 19775 / NCTC 10195 / G37) (Mycoplasmoides genitalium).